The sequence spans 767 residues: Probable ubiquitin carboxyl-terminal hydrolase creB (767 aa).

Residues Tyr-49–Thr-462 enclose the USP domain. Cys-58 (nucleophile) is an active-site residue. Disordered stretches follow at residues Glu-107 to Glu-140 and Ala-232 to Asn-263. Residues Ser-250–Asn-263 are compositionally biased toward polar residues. Residue His-413 is the Proton acceptor of the active site. The interval Leu-490–Ser-767 is disordered. Composition is skewed to low complexity over residues Glu-540–Ser-554 and Glu-564–Pro-573. The stretch at Lys-574 to Leu-641 forms a coiled coil. Residues Ala-577 to Gln-650 show a composition bias toward basic and acidic residues. Basic residues predominate over residues Arg-656–Arg-667. Residues Ser-690–Glu-700 show a composition bias toward polar residues. Residues Gln-701–Gln-713 show a composition bias toward low complexity. Residues Thr-731 to Gly-749 show a composition bias toward basic and acidic residues. Residues His-750–Ser-767 are compositionally biased toward basic residues.

It belongs to the peptidase C19 family. In terms of assembly, interacts with creA, creC and qutD.

The catalysed reaction is Thiol-dependent hydrolysis of ester, thioester, amide, peptide and isopeptide bonds formed by the C-terminal Gly of ubiquitin (a 76-residue protein attached to proteins as an intracellular targeting signal).. Ubiquitin thioesterase component of the regulatory network controlling carbon source utilization through ubiquitination and deubiquitination involving creA, creB, creC, creD and acrB. Deubiquitinates the creA catabolic repressor and the quinate permease qutD. Also plays a role in response to carbon starvation and the control of extracellular proteases activity. The chain is Probable ubiquitin carboxyl-terminal hydrolase creB (creB) from Aspergillus fumigatus (strain CBS 144.89 / FGSC A1163 / CEA10) (Neosartorya fumigata).